The sequence spans 356 residues: Protein MGF 360-19R (356 aa).

An ANK repeat occupies Leu-61–Leu-93.

Belongs to the asfivirus MGF 360 family.

Its function is as follows. Plays a role in virus cell tropism, and may be required for efficient virus replication in macrophages. The chain is Protein MGF 360-19R from African swine fever virus (isolate Pig/Kenya/KEN-50/1950) (ASFV).